A 349-amino-acid polypeptide reads, in one-letter code: Phosphoribosylformylglycinamidine cyclo-ligase (349 aa).

It belongs to the AIR synthase family.

It localises to the cytoplasm. It carries out the reaction 2-formamido-N(1)-(5-O-phospho-beta-D-ribosyl)acetamidine + ATP = 5-amino-1-(5-phospho-beta-D-ribosyl)imidazole + ADP + phosphate + H(+). The protein operates within purine metabolism; IMP biosynthesis via de novo pathway; 5-amino-1-(5-phospho-D-ribosyl)imidazole from N(2)-formyl-N(1)-(5-phospho-D-ribosyl)glycinamide: step 2/2. The chain is Phosphoribosylformylglycinamidine cyclo-ligase from Psychrobacter arcticus (strain DSM 17307 / VKM B-2377 / 273-4).